The following is a 622-amino-acid chain: C6 finger transcription factor fumR (622 aa).

The zn(2)-C6 fungal-type DNA-binding region spans 94-123 (CDRCHGQKLRCRRENNSDTCVRCARAGVRC). Disordered stretches follow at residues 127-175 (PMRL…HSDH), 206-248 (ALTA…APNL), 299-360 (FDQA…SNSI), and 556-585 (PATG…DAGD). 3 stretches are compositionally biased toward polar residues: residues 148–167 (PANG…GPND), 217–226 (VHTSQPSGPQ), and 347–360 (RGNS…SNSI). Residues 556–571 (PATGSASKTAASGPPA) show a composition bias toward low complexity.

It is found in the nucleus. Its function is as follows. Transcription factor that regulates the expression of the gene clusters that mediate the biosynthesis of pseurotin and fumagillin. This is C6 finger transcription factor fumR from Aspergillus fumigatus (strain ATCC MYA-4609 / CBS 101355 / FGSC A1100 / Af293) (Neosartorya fumigata).